The chain runs to 255 residues: Putative enoyl-CoA hydratase/isomerase YhaR (255 aa).

Helical transmembrane passes span 96-116 (VTIA…ALCA) and 126-146 (VLAM…HYLL).

It belongs to the enoyl-CoA hydratase/isomerase family.

Its subcellular location is the cell membrane. The polypeptide is Putative enoyl-CoA hydratase/isomerase YhaR (yhaR) (Bacillus subtilis (strain 168)).